The primary structure comprises 239 residues: tRNA (guanine-N(1)-)-methyltransferase (239 aa).

S-adenosyl-L-methionine-binding positions include glycine 108 and 127 to 132; that span reads LGDFVL.

The protein belongs to the RNA methyltransferase TrmD family. In terms of assembly, homodimer.

Its subcellular location is the cytoplasm. The enzyme catalyses guanosine(37) in tRNA + S-adenosyl-L-methionine = N(1)-methylguanosine(37) in tRNA + S-adenosyl-L-homocysteine + H(+). In terms of biological role, specifically methylates guanosine-37 in various tRNAs. The sequence is that of tRNA (guanine-N(1)-)-methyltransferase from Streptococcus thermophilus (strain ATCC BAA-250 / LMG 18311).